Consider the following 346-residue polypeptide: UDP-N-acetylenolpyruvoylglucosamine reductase (346 aa).

One can recognise an FAD-binding PCMH-type domain in the interval 18-189 (LHAQARAFIA…VSVVFALKTH (172 aa)). R165 is an active-site residue. The active-site Proton donor is S240. E336 is an active-site residue.

It belongs to the MurB family. FAD serves as cofactor.

Its subcellular location is the cytoplasm. It catalyses the reaction UDP-N-acetyl-alpha-D-muramate + NADP(+) = UDP-N-acetyl-3-O-(1-carboxyvinyl)-alpha-D-glucosamine + NADPH + H(+). The protein operates within cell wall biogenesis; peptidoglycan biosynthesis. In terms of biological role, cell wall formation. In Neisseria gonorrhoeae (strain ATCC 700825 / FA 1090), this protein is UDP-N-acetylenolpyruvoylglucosamine reductase.